The chain runs to 409 residues: Arginine deiminase (409 aa).

Residue Cys-399 is the Amidino-cysteine intermediate of the active site.

It belongs to the arginine deiminase family.

Its subcellular location is the cytoplasm. The enzyme catalyses L-arginine + H2O = L-citrulline + NH4(+). It functions in the pathway amino-acid degradation; L-arginine degradation via ADI pathway; carbamoyl phosphate from L-arginine: step 1/2. The polypeptide is Arginine deiminase (Streptococcus pneumoniae (strain P1031)).